A 107-amino-acid polypeptide reads, in one-letter code: DNA-directed RNA polymerase subunit omega (107 aa).

Positions 81–107 (MEEEAAKGNADAGQGEGDAPKTPGQDG) are disordered.

This sequence belongs to the RNA polymerase subunit omega family. As to quaternary structure, the RNAP catalytic core consists of 2 alpha, 1 beta, 1 beta' and 1 omega subunit. When a sigma factor is associated with the core the holoenzyme is formed, which can initiate transcription.

The catalysed reaction is RNA(n) + a ribonucleoside 5'-triphosphate = RNA(n+1) + diphosphate. In terms of biological role, promotes RNA polymerase assembly. Latches the N- and C-terminal regions of the beta' subunit thereby facilitating its interaction with the beta and alpha subunits. The protein is DNA-directed RNA polymerase subunit omega of Alkalilimnicola ehrlichii (strain ATCC BAA-1101 / DSM 17681 / MLHE-1).